We begin with the raw amino-acid sequence, 335 residues long: PA-phosphatase related-family protein DDB_G0275547 (335 aa).

6 consecutive transmembrane segments (helical) span residues 43 to 63, 93 to 113, 124 to 144, 202 to 222, 226 to 246, and 254 to 274; these read VMYL…GILF, VLIP…SLIV, ILGL…FKCF, SITA…FKIF, GHIF…LIGI, and HTFL…LSCY.

It belongs to the PA-phosphatase related phosphoesterase family.

It localises to the membrane. This is PA-phosphatase related-family protein DDB_G0275547 from Dictyostelium discoideum (Social amoeba).